Reading from the N-terminus, the 149-residue chain is Arginine regulator (149 aa).

Belongs to the ArgR family.

It is found in the cytoplasm. It functions in the pathway amino-acid degradation; L-arginine degradation via ADI pathway. Functionally, regulates the transcription of the arc operon, involved in arginine catabolism. The chain is Arginine regulator (argR1) from Bacillus cereus (strain ATCC 10987 / NRS 248).